The primary structure comprises 208 residues: Inactive ribonuclease-like protein 10 (208 aa).

An N-terminal signal peptide occupies residues 1–24 (MKVTLVHLLFMMLLLLLGLGLGLG). Residues Asn-125 and Asn-147 are each glycosylated (N-linked (GlcNAc...) asparagine).

The protein belongs to the pancreatic ribonuclease family. Post-translationally, the N-terminus is blocked. Glycosylated. As to expression, male-specific expression in proximal caput of the epididymis (at protein level).

The protein localises to the secreted. Functionally, secreted proximal epididymal protein required for post-testicular sperm maturation and male fertility. May be involved in sperm adhesion to the egg zona pellucida. Does not have ribonuclease activity. This is Inactive ribonuclease-like protein 10 (Rnase10) from Mus musculus (Mouse).